Consider the following 268-residue polypeptide: MSWKMALQIPGGFWAAAVTVMLVMLSTPVAEARDFPKDFLVQFKGMCYFTNGTERVRGVARYIYNREEYGRFDSDVGEFQAVTELGRSIEDWNNYKDFLEQERAAVDKVCRHNYEAELRTTLQRQVEPTVTISPSRTEALNHHNLLVCSVTDFYPAQIKVRWFRNDQEETAGVVSTSLIRNGDWTFQILVMLEITPQRGDIYTCQVEHPSLQSPITVEWRAQSESAQSKMLSGIGGFVLGLIFLGLGLIIRHRGQKGPRGPPPAGLLH.

Positions 1–32 (MSWKMALQIPGGFWAAAVTVMLVMLSTPVAEA) are cleaved as a signal peptide. The beta-1 stretch occupies residues 33–126 (RDFPKDFLVQ…ELRTTLQRQV (94 aa)). At 33 to 229 (RDFPKDFLVQ…RAQSESAQSK (197 aa)) the chain is on the extracellular side. 2 disulfides stabilise this stretch: Cys-47–Cys-110 and Cys-148–Cys-204. A glycan (N-linked (GlcNAc...) asparagine) is linked at Asn-51. The interval 127-229 (EPTVTISPSR…RAQSESAQSK (103 aa)) is beta-2. In terms of domain architecture, Ig-like C1-type spans 128 to 216 (PTVTISPSRT…EHPSLQSPIT (89 aa)). Residues 230-250 (MLSGIGGFVLGLIFLGLGLII) traverse the membrane as a helical segment. At 251–268 (RHRGQKGPRGPPPAGLLH) the chain is on the cytoplasmic side.

Belongs to the MHC class II family. In terms of assembly, heterodimer of an alpha and a beta subunit; also referred as MHC class II molecule. Dimer formation with HLA-DQA2, but not with HLA-DQA1, is required for efficient exit from the endoplasmic reticulum (ER). In the ER, forms a heterononamer; 3 MHC class II molecules bind to a CD74 homotrimer (also known as invariant chain or HLA class II histocompatibility antigen gamma chain). In the endosomal/lysosomal system; CD74 undergoes sequential degradation by various proteases; leaving a small fragment termed CLIP on each MHC class II molecule. MHC class II molecule interacts with HLA_DM, and HLA_DO in B-cells, in order to release CLIP and facilitate the binding of antigenic peptides. Association with HLA-DMA also occurs in skin Langerhans cells, in post-Golgi compartments. As to expression, restricted to skin Langerhans cells (at protein level).

The protein resides in the cell membrane. The protein localises to the endoplasmic reticulum membrane. It localises to the golgi apparatus. It is found in the trans-Golgi network membrane. Its subcellular location is the endosome membrane. The protein resides in the lysosome membrane. Its function is as follows. Binds peptides derived from antigens that access the endocytic route of antigen presenting cells (APC) and presents them on the cell surface for recognition by the CD4 T-cells. The peptide binding cleft accommodates peptides of 10-30 residues. The peptides presented by MHC class II molecules are generated mostly by degradation of proteins that access the endocytic route, where they are processed by lysosomal proteases and other hydrolases. Exogenous antigens that have been endocytosed by the APC are thus readily available for presentation via MHC II molecules, and for this reason this antigen presentation pathway is usually referred to as exogenous. As membrane proteins on their way to degradation in lysosomes as part of their normal turn-over are also contained in the endosomal/lysosomal compartments, exogenous antigens must compete with those derived from endogenous components. Autophagy is also a source of endogenous peptides, autophagosomes constitutively fuse with MHC class II loading compartments. In addition to APCs, other cells of the gastrointestinal tract, such as epithelial cells, express MHC class II molecules and CD74 and act as APCs, which is an unusual trait of the GI tract. To produce a MHC class II molecule that presents an antigen, three MHC class II molecules (heterodimers of an alpha and a beta chain) associate with a CD74 trimer in the ER to form a heterononamer. Soon after the entry of this complex into the endosomal/lysosomal system where antigen processing occurs, CD74 undergoes a sequential degradation by various proteases, including CTSS and CTSL, leaving a small fragment termed CLIP (class-II-associated invariant chain peptide). The removal of CLIP is facilitated by HLA-DM via direct binding to the alpha-beta-CLIP complex so that CLIP is released. HLA-DM stabilizes MHC class II molecules until primary high affinity antigenic peptides are bound. The MHC II molecule bound to a peptide is then transported to the cell membrane surface. In B-cells, the interaction between HLA-DM and MHC class II molecules is regulated by HLA-DO. Primary dendritic cells (DCs) also to express HLA-DO. Lysosomal microenvironment has been implicated in the regulation of antigen loading into MHC II molecules, increased acidification produces increased proteolysis and efficient peptide loading. The protein is HLA class II histocompatibility antigen, DQ beta 2 chain (HLA-DQB2) of Homo sapiens (Human).